A 508-amino-acid polypeptide reads, in one-letter code: Mevalonate kinase ERG12 (508 aa).

Positions 1–46 (MPPSNPAMVNGLNGSHANGNGNGHNHISDSGSETSGESSNGSGRRR) are disordered. The span at 10 to 42 (NGLNGSHANGNGNGHNHISDSGSETSGESSNGS) shows a compositional bias: low complexity. ATP is bound by residues K68, S200, and 205–211 (GAGLGSS). Residues S211 and E256 each coordinate Mg(2+). The active-site Proton acceptor is D267.

The protein belongs to the GHMP kinase family. Mevalonate kinase subfamily. In terms of assembly, homodimer. Mg(2+) serves as cofactor.

Its subcellular location is the cytoplasm. The protein localises to the cytosol. The enzyme catalyses (R)-mevalonate + ATP = (R)-5-phosphomevalonate + ADP + H(+). Its pathway is isoprenoid biosynthesis; isopentenyl diphosphate biosynthesis via mevalonate pathway; isopentenyl diphosphate from (R)-mevalonate: step 1/3. Its function is as follows. Mevalonate kinase; part of the second module of ergosterol biosynthesis pathway that includes the middle steps of the pathway. ERG12 converts mevalonate into 5-phosphomevalonate. The second module is carried out in the vacuole and involves the formation of farnesyl diphosphate, which is also an important intermediate in the biosynthesis of ubiquinone, dolichol, heme and prenylated proteins. Activity by the mevalonate kinase ERG12 (FG05912) first converts mevalonate into 5-phosphomevalonate. 5-phosphomevalonate is then further converted to 5-diphosphomevalonate by the phosphomevalonate kinase ERG8 (FG09764). The diphosphomevalonate decarboxylase ERG19 (FG10424) then produces isopentenyl diphosphate. The isopentenyl-diphosphate delta-isomerase IDI1 (FG09722) then catalyzes the 1,3-allylic rearrangement of the homoallylic substrate isopentenyl (IPP) to its highly electrophilic allylic isomer, dimethylallyl diphosphate (DMAPP). Finally the farnesyl diphosphate synthase ERG20 (FG06784) catalyzes the sequential condensation of isopentenyl pyrophosphate with dimethylallyl pyrophosphate, and then with the resultant geranylpyrophosphate to the ultimate product farnesyl pyrophosphate. In Gibberella zeae (strain ATCC MYA-4620 / CBS 123657 / FGSC 9075 / NRRL 31084 / PH-1) (Wheat head blight fungus), this protein is Mevalonate kinase ERG12.